Reading from the N-terminus, the 276-residue chain is Pantothenate synthetase (276 aa).

An ATP-binding site is contributed by 27–34 (MGALHRGH). H34 (proton donor) is an active-site residue. Q58 lines the (R)-pantoate pocket. Q58 serves as a coordination point for beta-alanine. 147-150 (GKKD) contacts ATP. Q153 serves as a coordination point for (R)-pantoate. Residues V176 and 184 to 187 (LSSR) each bind ATP.

The protein belongs to the pantothenate synthetase family. In terms of assembly, homodimer.

The protein localises to the cytoplasm. The enzyme catalyses (R)-pantoate + beta-alanine + ATP = (R)-pantothenate + AMP + diphosphate + H(+). Its pathway is cofactor biosynthesis; (R)-pantothenate biosynthesis; (R)-pantothenate from (R)-pantoate and beta-alanine: step 1/1. Catalyzes the condensation of pantoate with beta-alanine in an ATP-dependent reaction via a pantoyl-adenylate intermediate. The protein is Pantothenate synthetase of Helicobacter pylori (strain J99 / ATCC 700824) (Campylobacter pylori J99).